Here is a 267-residue protein sequence, read N- to C-terminus: Small ribosomal subunit protein uS2 (267 aa).

The disordered stretch occupies residues 232–267 (ATVREEEFADAPAEDAKPARRAPAKKAAADKGEAQA). Residues 258 to 267 (AAADKGEAQA) show a composition bias toward basic and acidic residues.

This sequence belongs to the universal ribosomal protein uS2 family.

The sequence is that of Small ribosomal subunit protein uS2 from Stenotrophomonas maltophilia (strain R551-3).